Consider the following 275-residue polypeptide: MGQKINPHGFRLGITTEWKSRWYADKQYKDYVKEDVAIRKLLATGLERAGIADVEIERTRDRVRVDIHTARPGIVIGRRGTEADRIRADLEKLTGKQVQLNILEVKNPESQAQLVAQGVAEQLSNRVAFRRAMRKAIQSAMRQPNVKGIRVQCSGRLGGAEMSRSEFYREGRVPLHTLRADIDYGLYEAKTTFGRIGVKVWIYKGDIVGGKRELAAAAPASDRPRRERPSGTRPRRSGSAGTTATSTEAGRAATSDAPAAGTAAAAEAPAESTES.

Residues 38-106 (IRKLLATGLE…QVQLNILEVK (69 aa)) enclose the KH type-2 domain. Positions 215-275 (AAAAPASDRP…AEAPAESTES (61 aa)) are disordered. Low complexity predominate over residues 237 to 275 (SGSAGTTATSTEAGRAATSDAPAAGTAAAAEAPAESTES).

It belongs to the universal ribosomal protein uS3 family. As to quaternary structure, part of the 30S ribosomal subunit. Forms a tight complex with proteins S10 and S14.

Its function is as follows. Binds the lower part of the 30S subunit head. Binds mRNA in the 70S ribosome, positioning it for translation. The polypeptide is Small ribosomal subunit protein uS3 (Mycolicibacterium smegmatis (strain ATCC 700084 / mc(2)155) (Mycobacterium smegmatis)).